The primary structure comprises 176 residues: Ribosome maturation factor RimM (176 aa).

In terms of domain architecture, PRC barrel spans 99–174 (KNEFYITDLI…IVLIQPEIWN (76 aa)).

This sequence belongs to the RimM family. Binds ribosomal protein uS19.

It localises to the cytoplasm. Functionally, an accessory protein needed during the final step in the assembly of 30S ribosomal subunit, possibly for assembly of the head region. Essential for efficient processing of 16S rRNA. May be needed both before and after RbfA during the maturation of 16S rRNA. It has affinity for free ribosomal 30S subunits but not for 70S ribosomes. In Leptospira interrogans serogroup Icterohaemorrhagiae serovar copenhageni (strain Fiocruz L1-130), this protein is Ribosome maturation factor RimM.